The following is a 76-amino-acid chain: Small ribosomal subunit protein bS18 (76 aa).

Belongs to the bacterial ribosomal protein bS18 family. As to quaternary structure, part of the 30S ribosomal subunit. Forms a tight heterodimer with protein bS6.

In terms of biological role, binds as a heterodimer with protein bS6 to the central domain of the 16S rRNA, where it helps stabilize the platform of the 30S subunit. In Pelotomaculum thermopropionicum (strain DSM 13744 / JCM 10971 / SI), this protein is Small ribosomal subunit protein bS18.